The following is a 128-amino-acid chain: Gastrotropin (128 aa).

Residue Ala2 is modified to N-acetylalanine.

Belongs to the calycin superfamily. Fatty-acid binding protein (FABP) family. Found exclusively in the ileum and to a lesser extent in distal jejunum.

The protein localises to the cytoplasm. Its subcellular location is the membrane. Binds to bile acids and is involved in enterohepatic bile acid metabolism. Required for efficient apical to basolateral transport of conjugated bile acids in ileal enterocytes. Stimulates gastric acid and pepsinogen secretion. This is Gastrotropin (FABP6) from Sus scrofa (Pig).